A 239-amino-acid polypeptide reads, in one-letter code: tRNA (guanine-N(1)-)-methyltransferase (239 aa).

S-adenosyl-L-methionine-binding positions include G108 and 127-132 (IGDYVL).

Belongs to the RNA methyltransferase TrmD family. As to quaternary structure, homodimer.

The protein resides in the cytoplasm. The catalysed reaction is guanosine(37) in tRNA + S-adenosyl-L-methionine = N(1)-methylguanosine(37) in tRNA + S-adenosyl-L-homocysteine + H(+). In terms of biological role, specifically methylates guanosine-37 in various tRNAs. This Lactobacillus helveticus (strain DPC 4571) protein is tRNA (guanine-N(1)-)-methyltransferase.